Reading from the N-terminus, the 620-residue chain is Acetylcholinesterase 1 (620 aa).

Residues methionine 1–glycine 31 form the signal peptide. An N-linked (GlcNAc...) asparagine glycan is attached at asparagine 74. Cysteine 82 and cysteine 109 are joined by a disulfide. Catalysis depends on serine 216, which acts as the Acyl-ester intermediate. Cysteine 270 and cysteine 286 are joined by a disulfide. Asparagine 272 is a glycosylation site (N-linked (GlcNAc...) asparagine). Residues glutamate 346 and histidine 468 each act as charge relay system in the active site. Cysteines 430 and 558 form a disulfide. Asparagine 486 and asparagine 536 each carry an N-linked (GlcNAc...) asparagine glycan.

It belongs to the type-B carboxylesterase/lipase family. Oligomer composed of disulfide-linked homodimers.

It localises to the synapse. The protein resides in the secreted. It is found in the cell membrane. The enzyme catalyses acetylcholine + H2O = choline + acetate + H(+). In terms of biological role, rapidly hydrolyzes acetylcholine and releases choline into the synapse. It can hydrolyze propionylcholine and butyrylthiocholine in vitro. In Caenorhabditis elegans, this protein is Acetylcholinesterase 1 (ace-1).